A 348-amino-acid polypeptide reads, in one-letter code: N-formyl peptide receptor 2 (348 aa).

Asn1 carries N-linked (GlcNAc...) asparagine glycosylation. Topologically, residues 1-24 (NFSTPLNEYEEGSYESAGYTVLRI) are extracellular. The chain crosses the membrane as a helical span at residues 25–47 (LPLVVLGVTFVLGVLGNGLVIWV). Residues 48–58 (AGFRMTRTVTT) lie on the Cytoplasmic side of the membrane. Residues 59-80 (ICYLNLALADFSFTATLPFLIV) traverse the membrane as a helical segment. Over 81–97 (SMAMGEKWPFGWFLCKL) the chain is Extracellular. Cys95 and Cys173 form a disulfide bridge. The helical transmembrane segment at 98-118 (IHIVVDINLFGSVFLIGFIAL) threads the bilayer. Topologically, residues 119–137 (DRCICVLHPVWAQNHRTVS) are cytoplasmic. Residues 138-159 (LAMKVIVGPWILALVLTLPVFL) form a helical membrane-spanning segment. The Extracellular segment spans residues 160–202 (FLTTVTIPNGDTYCTFNFASWGGTPEERLKVAITLLTARGIIR). The chain crosses the membrane as a helical span at residues 203–223 (FVIGFSLPMSIVAICYGLIAA). The Cytoplasmic portion of the chain corresponds to 224 to 239 (KIHKKGMIKSSRPLRV). Residues 240–263 (LTAVVASFFICWFPFQLVALLGTV) form a helical membrane-spanning segment. Residues 264–283 (WLKEMLFYGKYKIIDILVNP) lie on the Extracellular side of the membrane. A helical membrane pass occupies residues 284–303 (TSSLAFFNCCLNPMLYVFVG). Over 304-348 (QDFRERLIHSLPTSLERALSEDSAPTNDTAANCASPPAETELQAM) the chain is Cytoplasmic. A disordered region spans residues 322 to 348 (LSEDSAPTNDTAANCASPPAETELQAM). Residues 326-335 (SAPTNDTAAN) show a composition bias toward polar residues.

This sequence belongs to the G-protein coupled receptor 1 family. In terms of assembly, interacts with Amyloid-beta protein 42, product of APP; the interaction takes place at the cell surface and the complex is then rapidly internalized.

It is found in the cell membrane. Functionally, low affinity receptor for N-formyl-methionyl peptides, which are powerful neutrophil chemotactic factors. Binding of FMLP to the receptor causes activation of neutrophils. This response is mediated via a G-protein that activates a phosphatidylinositol-calcium second messenger system. Receptor for the chemokine-like protein FAM19A5, mediating FAM19A5-stimulated macrophage chemotaxis and the inhibitory effect on TNFSF11/RANKL-induced osteoclast differentiation. This is N-formyl peptide receptor 2 (FPR2) from Pan troglodytes (Chimpanzee).